Reading from the N-terminus, the 130-residue chain is Iron-sulfur cluster insertion protein ErpA (130 aa).

Cys-46, Cys-116, and Cys-118 together coordinate iron-sulfur cluster.

This sequence belongs to the HesB/IscA family. In terms of assembly, homodimer. Iron-sulfur cluster is required as a cofactor.

In terms of biological role, required for insertion of 4Fe-4S clusters for at least IspG. The chain is Iron-sulfur cluster insertion protein ErpA from Legionella pneumophila (strain Paris).